The chain runs to 602 residues: MTDVPVSRIRNFSIIAHIDHGKSTLADRMLQDTQTVAQRDMKEQFLDNMELERERGITIKLQAARMRYVAKDGEEYILNLIDTPGHVDFSYEVSRSLAACEGALLVVDASQGVEAQTLANVYLALDNNLEIIPVLNKIDLPGAEPDRVTEEIEEVVGLDCTDIIRASAKQGLGINDILESIVQQVPPPADTIDQPLRALIFDSYYDPYRGVIVYFRVMDGEVKKGDKVRLMASKKEYEIDELGVLAPNQVQVDALHAGEVGYFAAAIKSVEDARVGDTITSAVHPAPAPLPGYTEAKPMVFCGLFPTDADQYSDLRDALDKLKLNDAALSFEPETSSAMGFGFRCGFLGLLHLEIVQERLEREYNLDLITTAPSVVYRVTTTDGEVMEIDNPSQLPDPQKREKIEEPYIQVDVITPEEFVGTIMDLCQTRRGIFKDMKYFTESRTNIIYELPLAEVVTDFFDQLKSRTRGYASMEYQLIGYRVGQLVRLDILVNKDSVDSLAMIVHRDKAYNVGRAMAEKLKELIPRHQFKIPIQAAIGSKIIASEHIPALRKDVLAKCYGGDISRKKKLLQKQAKGKKRMKSIGTVDVPQEAFMAVLKLDQ.

One can recognise a tr-type G domain in the interval 7–189; that stretch reads SRIRNFSIIA…SIVQQVPPPA (183 aa). GTP is bound by residues 19-24 and 136-139; these read DHGKST and NKID.

This sequence belongs to the TRAFAC class translation factor GTPase superfamily. Classic translation factor GTPase family. LepA subfamily.

It localises to the cell inner membrane. It catalyses the reaction GTP + H2O = GDP + phosphate + H(+). Functionally, required for accurate and efficient protein synthesis under certain stress conditions. May act as a fidelity factor of the translation reaction, by catalyzing a one-codon backward translocation of tRNAs on improperly translocated ribosomes. Back-translocation proceeds from a post-translocation (POST) complex to a pre-translocation (PRE) complex, thus giving elongation factor G a second chance to translocate the tRNAs correctly. Binds to ribosomes in a GTP-dependent manner. The protein is Elongation factor 4 of Picosynechococcus sp. (strain ATCC 27264 / PCC 7002 / PR-6) (Agmenellum quadruplicatum).